A 105-amino-acid chain; its full sequence is Large ribosomal subunit protein eL30 (105 aa).

It belongs to the eukaryotic ribosomal protein eL30 family.

This Candida glabrata (strain ATCC 2001 / BCRC 20586 / JCM 3761 / NBRC 0622 / NRRL Y-65 / CBS 138) (Yeast) protein is Large ribosomal subunit protein eL30 (RPL30).